A 250-amino-acid chain; its full sequence is Phosphonates import ATP-binding protein PhnC (250 aa).

Residues 2–247 (IVFNNVNKVW…KLDAQAMKKI (246 aa)) form the ABC transporter domain. 35 to 42 (GLSGAGKT) contacts ATP.

It belongs to the ABC transporter superfamily. Phosphonates importer (TC 3.A.1.9.1) family. As to quaternary structure, the complex is composed of two ATP-binding proteins (PhnC), two transmembrane proteins (PhnE) and a solute-binding protein (PhnD).

It localises to the cell membrane. It catalyses the reaction phosphonate(out) + ATP + H2O = phosphonate(in) + ADP + phosphate + H(+). Part of the ABC transporter complex PhnCDE involved in phosphonates import. Responsible for energy coupling to the transport system. This is Phosphonates import ATP-binding protein PhnC from Mycoplasma mycoides subsp. mycoides SC (strain CCUG 32753 / NCTC 10114 / PG1).